We begin with the raw amino-acid sequence, 352 residues long: MDYQVSSPTYDIDYYTSEPCQKINVKQIAAHLLPPLYSLVFIFGFVGNILVVLILINCKRLKSMTDIYLLNLAISDLLFLLTVPFWAHYAAAQWDFGNIMCQLLTGLYFIGFFSGIFFIILLTIDRYLAIVHAVFALKARTVTFGVVTSVITWVVAVFASLPGIIFTRSQREGLHYTCSSHFPYSQYQFWKNFRTLKIVILGLVLPLLVMVICYSGILKTLLRCRNEKKRHRAVRLIFTIMIVYFLFWAPYNIVLLLNTFQEFFGLNNCSSSNRLDQAMQVTETLGMTHCCINPIIYAFVGEKFRNYLLVFFQKHIAKRFCKCCSIFQQEAPERASSVYTRSTGEQEISVGL.

Over 1-30 (MDYQVSSPTYDIDYYTSEPCQKINVKQIAA) the chain is Extracellular. Tyrosine 3 is modified (sulfotyrosine). Serine 6 and serine 7 each carry an O-linked (GalNAc...) serine glycan. 3 positions are modified to sulfotyrosine: tyrosine 10, tyrosine 14, and tyrosine 15. Disulfide bonds link cysteine 20–cysteine 269 and cysteine 101–cysteine 178. A helical membrane pass occupies residues 31 to 58 (HLLPPLYSLVFIFGFVGNILVVLILINC). Residues 59 to 68 (KRLKSMTDIY) lie on the Cytoplasmic side of the membrane. The chain crosses the membrane as a helical span at residues 69-89 (LLNLAISDLLFLLTVPFWAHY). Residues 90-102 (AAAQWDFGNIMCQ) lie on the Extracellular side of the membrane. The chain crosses the membrane as a helical span at residues 103-124 (LLTGLYFIGFFSGIFFIILLTI). Residues 125–141 (DRYLAIVHAVFALKART) lie on the Cytoplasmic side of the membrane. A helical membrane pass occupies residues 142–166 (VTFGVVTSVITWVVAVFASLPGIIF). Residues 167–198 (TRSQREGLHYTCSSHFPYSQYQFWKNFRTLKI) are Extracellular-facing. The chain crosses the membrane as a helical span at residues 199–218 (VILGLVLPLLVMVICYSGIL). Residues 219–235 (KTLLRCRNEKKRHRAVR) are Cytoplasmic-facing. Residues 236–260 (LIFTIMIVYFLFWAPYNIVLLLNTF) traverse the membrane as a helical segment. The Extracellular segment spans residues 261 to 277 (QEFFGLNNCSSSNRLDQ). A helical membrane pass occupies residues 278-301 (AMQVTETLGMTHCCINPIIYAFVG). Residues 302–352 (EKFRNYLLVFFQKHIAKRFCKCCSIFQQEAPERASSVYTRSTGEQEISVGL) lie on the Cytoplasmic side of the membrane. S-palmitoyl cysteine attachment occurs at residues cysteine 321, cysteine 323, and cysteine 324. Phosphoserine; by BARK1 occurs at positions 336, 337, 342, and 349.

Belongs to the G-protein coupled receptor 1 family. As to quaternary structure, interacts with PRAF2. Efficient ligand binding to CCL3/MIP-1alpha and CCL4/MIP-1beta requires sulfation, O-glycosylation and sialic acid modifications. Glycosylation on Ser-6 is required for efficient binding of CCL4. Interacts with GRK2. Interacts with ARRB1 and ARRB2. Interacts with CNIH4. Interacts with S100A4; this interaction stimulates T-lymphocyte chemotaxis. In terms of processing, sulfated on at least 2 of the N-terminal tyrosines. Sulfation is required for efficient binding of the chemokines, CCL3 and CCL4. Palmitoylation in the C-terminal is important for cell surface expression. Post-translationally, phosphorylation on serine residues in the C-terminal is stimulated by binding CC chemokines especially by APO-RANTES. In terms of processing, O-glycosylated, but not N-glycosylated. Ser-6 appears to be the major site even if Ser-7 may be also O-glycosylated. Also sialylated glycans present which contribute to chemokine binding. Thr-16 and Ser-17 may also be glycosylated and, if so, with small moieties such as a T-antigen.

It localises to the cell membrane. Functionally, receptor for a number of inflammatory CC-chemokines including CCL3/MIP-1-alpha, CCL4/MIP-1-beta and RANTES and subsequently transduces a signal by increasing the intracellular calcium ion level. May play a role in the control of granulocytic lineage proliferation or differentiation. Participates in T-lymphocyte migration to the infection site by acting as a chemotactic receptor. This chain is C-C chemokine receptor type 5 (CCR5), found in Mandrillus sphinx (Mandrill).